We begin with the raw amino-acid sequence, 500 residues long: Glycogen synthase (500 aa).

Residue Lys-20 participates in ADP-alpha-D-glucose binding.

This sequence belongs to the glycosyltransferase 1 family. Bacterial/plant glycogen synthase subfamily.

It catalyses the reaction [(1-&gt;4)-alpha-D-glucosyl](n) + ADP-alpha-D-glucose = [(1-&gt;4)-alpha-D-glucosyl](n+1) + ADP + H(+). Its pathway is glycan biosynthesis; glycogen biosynthesis. Functionally, synthesizes alpha-1,4-glucan chains using ADP-glucose. This chain is Glycogen synthase, found in Desulforudis audaxviator (strain MP104C).